Consider the following 205-residue polypeptide: Small ribosomal subunit protein uS4 (205 aa).

The tract at residues 1 to 46 (MSKRHSAKYKIDRRMGENLWGRPKSPVNQRSYGPGQHGQRRKQKVS) is disordered. The region spanning 94 to 154 (SRLDAIVYRA…EKSRNMALVL (61 aa)) is the S4 RNA-binding domain.

Belongs to the universal ribosomal protein uS4 family. Part of the 30S ribosomal subunit. Contacts protein S5. The interaction surface between S4 and S5 is involved in control of translational fidelity.

In terms of biological role, one of the primary rRNA binding proteins, it binds directly to 16S rRNA where it nucleates assembly of the body of the 30S subunit. Its function is as follows. With S5 and S12 plays an important role in translational accuracy. This is Small ribosomal subunit protein uS4 from Caulobacter sp. (strain K31).